The primary structure comprises 608 residues: Pentatricopeptide repeat-containing protein At5g40410, mitochondrial (608 aa).

A mitochondrion-targeting transit peptide spans Met-1 to His-28. PPR repeat units lie at residues Leu-30–Arg-64, His-65–Arg-95, Asp-96–Phe-130, Asn-133–Glu-167, Glu-168–Lys-198, Asn-199–Pro-233, Asp-234–Gly-268, Asn-269–Pro-299, Asp-300–Pro-334, Asp-335–Arg-365, and Arg-371–Glu-401. A type E motif region spans residues Val-406–Gly-481. Residues Asn-482–Lys-512 are type E(+) motif. Residues Glu-514–Trp-608 are type DYW motif.

It belongs to the PPR family. PCMP-H subfamily.

It is found in the mitochondrion. This is Pentatricopeptide repeat-containing protein At5g40410, mitochondrial (PCMP-H15) from Arabidopsis thaliana (Mouse-ear cress).